The primary structure comprises 79 residues: D-alanyl carrier protein (79 aa).

The Carrier domain maps to 1 to 76 (MKEQIFDIIE…KIAARVQEKK (76 aa)). Ser-34 is subject to O-(pantetheine 4'-phosphoryl)serine.

This sequence belongs to the DltC family. In terms of processing, 4'-phosphopantetheine is transferred from CoA to a specific serine of apo-DCP.

The protein resides in the cytoplasm. It participates in cell wall biogenesis; lipoteichoic acid biosynthesis. Its function is as follows. Carrier protein involved in the D-alanylation of lipoteichoic acid (LTA). The loading of thioester-linked D-alanine onto DltC is catalyzed by D-alanine--D-alanyl carrier protein ligase DltA. The DltC-carried D-alanyl group is further transferred to cell membrane phosphatidylglycerol (PG) by forming an ester bond, probably catalyzed by DltD. D-alanylation of LTA plays an important role in modulating the properties of the cell wall in Gram-positive bacteria, influencing the net charge of the cell wall. The protein is D-alanyl carrier protein of Lactococcus lactis subsp. lactis (strain IL1403) (Streptococcus lactis).